Consider the following 150-residue polypeptide: Protein A151R (150 aa).

The protein belongs to the asfivirus A151R family. Monomer. Homodimer. Interacts with protein B119L. Interacts with membrane protein E248R. The cofactor is Zn(2+).

In terms of biological role, may participate in a redox cascade for the formation of disulfide bonds in viral proteins. The protein is Protein A151R of African swine fever virus (isolate Pig/Kenya/KEN-50/1950) (ASFV).